The chain runs to 207 residues: Ion-translocating oxidoreductase complex subunit G (207 aa).

A helical membrane pass occupies residues Gly-11–Leu-31. Residue Thr-175 is modified to FMN phosphoryl threonine.

This sequence belongs to the RnfG family. As to quaternary structure, the complex is composed of six subunits: RnfA, RnfB, RnfC, RnfD, RnfE and RnfG. FMN is required as a cofactor.

The protein resides in the cell inner membrane. In terms of biological role, part of a membrane-bound complex that couples electron transfer with translocation of ions across the membrane. The chain is Ion-translocating oxidoreductase complex subunit G from Haemophilus influenzae (strain PittEE).